A 1079-amino-acid polypeptide reads, in one-letter code: Transport and Golgi organization protein 6 homolog (1079 aa).

Residues 473–493 (VPVLLDSLLPLLRVFFSLYCF) traverse the membrane as a helical segment. The residue at position 561 (S561) is a Phosphoserine. The tract at residues 767–818 (AQSTLNQKDPGQKIEEQRQTSPDISTEGAQKPPRTGQGSSGPCTATSQPPGS) is disordered. Polar residues-rich tracts occupy residues 785–794 (QTSPDISTEG) and 802–818 (GQGSSGPCTATSQPPGS). 2 HEAT repeats span residues 864 to 902 (LLQIFLENLEHEDSFVYLSAIQGIALLSDVYPEEILVDL) and 937 to 973 (SKYREPLIHTFLRGVRDPDAAHRASSLANLGELCQCL).

This sequence belongs to the Tango6 family.

It is found in the membrane. This chain is Transport and Golgi organization protein 6 homolog (Tango6), found in Mus musculus (Mouse).